The chain runs to 100 residues: Large ribosomal subunit protein bL28 (100 aa).

The protein belongs to the bacterial ribosomal protein bL28 family.

The sequence is that of Large ribosomal subunit protein bL28 from Methylobacterium radiotolerans (strain ATCC 27329 / DSM 1819 / JCM 2831 / NBRC 15690 / NCIMB 10815 / 0-1).